Reading from the N-terminus, the 354-residue chain is Carbamoyl phosphate synthase arginine-specific small chain (354 aa).

Residues 1 to 163 form a CPSase region; sequence MKAYLHVASG…RTIETYGEGG (163 aa). Positions 46, 213, and 215 each coordinate L-glutamine. Positions 165-352 constitute a Glutamine amidotransferase type-1 domain; the sequence is HLVLVDFGYK…LQTVFKGENV (188 aa). The active-site Nucleophile is cysteine 240. L-glutamine contacts are provided by leucine 241, glutamine 244, asparagine 282, and tyrosine 285. Residues histidine 325 and glutamate 327 contribute to the active site.

This sequence belongs to the CarA family. In terms of assembly, composed of two chains; the small (or glutamine) chain promotes the hydrolysis of glutamine to ammonia, which is used by the large (or ammonia) chain to synthesize carbamoyl phosphate. Tetramer of heterodimers (alpha,beta)4.

The catalysed reaction is hydrogencarbonate + L-glutamine + 2 ATP + H2O = carbamoyl phosphate + L-glutamate + 2 ADP + phosphate + 2 H(+). It catalyses the reaction L-glutamine + H2O = L-glutamate + NH4(+). It functions in the pathway amino-acid biosynthesis; L-arginine biosynthesis; carbamoyl phosphate from bicarbonate: step 1/1. Small subunit of the glutamine-dependent carbamoyl phosphate synthetase (CPSase). CPSase catalyzes the formation of carbamoyl phosphate from the ammonia moiety of glutamine, carbonate, and phosphate donated by ATP, constituting the first step of the biosynthetic pathway leading to arginine and/or urea. The small subunit (glutamine amidotransferase) binds and cleaves glutamine to supply the large subunit with the substrate ammonia. This chain is Carbamoyl phosphate synthase arginine-specific small chain, found in Geobacillus stearothermophilus (Bacillus stearothermophilus).